We begin with the raw amino-acid sequence, 164 residues long: HTH-type transcriptional regulator IscR (164 aa).

An HTH rrf2-type domain is found at 2–131 (RLTSKGRYAV…NNITLAELVN (130 aa)). The H-T-H motif DNA-binding region spans 28–51 (LADISERQGISLSYLEQLFSRLRK). 3 residues coordinate [2Fe-2S] cluster: Cys-92, Cys-98, and Cys-104. The interval 143 to 164 (NNDTRRTANGRPQETINVNLRA) is disordered. The span at 152–164 (GRPQETINVNLRA) shows a compositional bias: polar residues.

Requires [2Fe-2S] cluster as cofactor.

In terms of biological role, regulates the transcription of several operons and genes involved in the biogenesis of Fe-S clusters and Fe-S-containing proteins. In Yersinia pseudotuberculosis serotype O:1b (strain IP 31758), this protein is HTH-type transcriptional regulator IscR.